Reading from the N-terminus, the 356-residue chain is HTH-type transcriptional regulator AglR (356 aa).

Positions 1-57 (MPVNLKQLAELLGLSQTTVSRALNGYPEVNAETRARVLEAVRETGYRPNRAAQRLAT) constitute an HTH lacI-type domain. A DNA-binding region (H-T-H motif) is located at residues 5-24 (LKQLAELLGLSQTTVSRALN). Positions 337 to 356 (TGPAPDRSPLPNPSPQVGGA) are disordered.

In terms of biological role, probable regulatory protein for the binding-protein-dependent transport system for alpha-glucosides such as sucrose, maltose and trehalose. This chain is HTH-type transcriptional regulator AglR (aglR), found in Rhizobium meliloti (strain 1021) (Ensifer meliloti).